The primary structure comprises 524 residues: G1/S-specific cyclin-E (524 aa).

Residues 1–155 form a disordered region; the sequence is MAGRKSSRTA…EESHEMVRLE (155 aa). The span at 18 to 47 shows a compositional bias: basic and acidic residues; it reads KPERKSAILSPHDELRERLLETAIDMKENI. Residues 48–62 are compositionally biased toward polar residues; the sequence is PQRNTRNSSVGSQKS. Composition is skewed to basic and acidic residues over residues 63 to 78, 86 to 95, and 146 to 155; these read DCSE…EGPA, KHRNGSREDS, and EESHEMVRLE.

Belongs to the cyclin family. Cyclin E subfamily. As to quaternary structure, interacts with a member of the CDK2/CDK protein kinases to form a serine/threonine kinase holoenzyme complex. The cyclin subunit imparts substrate specificity to the complex. Expressed dynamically in proliferating cells throughout development. Detectable in larval blast cells undergoing active proliferation that give rise to all tissue types, including germline, intestine, hypodermis, neurons, and muscle.

It is found in the nucleus. Its subcellular location is the cytoplasm. The protein resides in the cytoskeleton. It localises to the microtubule organizing center. The protein localises to the centrosome. It is found in the centriole. Essential for the control of the cell cycle at the G1/S (start) transition. In association with cdk-2, regulates proliferation, quiescent state and cell fate during the development of several cell lineages. In the embryo, initiates the establishment of cell polarity through the recruitment of the centrosomal proteins spd-2 and spd-5 during prophase. During the development of the vulva, controls the onset of vulval cell terminal differentiation by controlling the duration of G1 phase. During hypoderm development at early larval stages, controls syncytial fate of seam cell daughter cells. Involved in the progression of cell division in the intestinal lineage in larvae, and in particular in endoreplication, a specific growth pathway in the intestinal epithelium, required for feeding and gut development in growing larvae. By controlling the activity of translational repressor gld-1, regulates the pool of germline stem cells and the size of the mitotic zone by preventing entry into meiosis. In addition, repression of expression by gld-1 prevents mitosis re-entry in meiotic germline cells. This is G1/S-specific cyclin-E from Caenorhabditis elegans.